Reading from the N-terminus, the 202-residue chain is Small ribosomal subunit protein uS4c (202 aa).

The S4 RNA-binding domain occupies 90–153; sequence MRLDNVIFRL…KSETIISKNI (64 aa).

This sequence belongs to the universal ribosomal protein uS4 family. In terms of assembly, part of the 30S ribosomal subunit. Contacts protein S5. The interaction surface between S4 and S5 is involved in control of translational fidelity.

The protein resides in the plastid. The protein localises to the chloroplast. Functionally, one of the primary rRNA binding proteins, it binds directly to 16S rRNA where it nucleates assembly of the body of the 30S subunit. In terms of biological role, with S5 and S12 plays an important role in translational accuracy. The polypeptide is Small ribosomal subunit protein uS4c (rps4) (Hylocomium splendens (Glittering wood-moss)).